The chain runs to 713 residues: Ribosomal RNA large subunit methyltransferase K/L (713 aa).

Residues 43–154 (LAYRITLWTR…NGVITIAMNF (112 aa)) form the THUMP domain.

The protein belongs to the methyltransferase superfamily. RlmKL family.

Its subcellular location is the cytoplasm. The enzyme catalyses guanosine(2445) in 23S rRNA + S-adenosyl-L-methionine = N(2)-methylguanosine(2445) in 23S rRNA + S-adenosyl-L-homocysteine + H(+). It catalyses the reaction guanosine(2069) in 23S rRNA + S-adenosyl-L-methionine = N(2)-methylguanosine(2069) in 23S rRNA + S-adenosyl-L-homocysteine + H(+). In terms of biological role, specifically methylates the guanine in position 2445 (m2G2445) and the guanine in position 2069 (m7G2069) of 23S rRNA. This Shewanella sp. (strain ANA-3) protein is Ribosomal RNA large subunit methyltransferase K/L.